The sequence spans 137 residues: 6,7-dimethyl-8-ribityllumazine synthase (137 aa).

Residues Phe11, 43 to 45 (SFD), and 67 to 69 (CVI) each bind 5-amino-6-(D-ribitylamino)uracil. Position 72-73 (72-73 (DT)) interacts with (2S)-2-hydroxy-3-oxobutyl phosphate. His75 acts as the Proton donor in catalysis. Leu100 lines the 5-amino-6-(D-ribitylamino)uracil pocket. Arg115 serves as a coordination point for (2S)-2-hydroxy-3-oxobutyl phosphate.

Belongs to the DMRL synthase family. In terms of assembly, forms an icosahedral capsid composed of 60 subunits, arranged as a dodecamer of pentamers.

The enzyme catalyses (2S)-2-hydroxy-3-oxobutyl phosphate + 5-amino-6-(D-ribitylamino)uracil = 6,7-dimethyl-8-(1-D-ribityl)lumazine + phosphate + 2 H2O + H(+). Its pathway is cofactor biosynthesis; riboflavin biosynthesis; riboflavin from 2-hydroxy-3-oxobutyl phosphate and 5-amino-6-(D-ribitylamino)uracil: step 1/2. Its function is as follows. Catalyzes the formation of 6,7-dimethyl-8-ribityllumazine by condensation of 5-amino-6-(D-ribitylamino)uracil with 3,4-dihydroxy-2-butanone 4-phosphate. This is the penultimate step in the biosynthesis of riboflavin. The sequence is that of 6,7-dimethyl-8-ribityllumazine synthase from Methanococcus maripaludis (strain C6 / ATCC BAA-1332).